The chain runs to 21 residues: 40 kDa major outer membrane protein (21 aa).

As to quaternary structure, disulfide bond interactions within and between MOMP molecules and other components form high molecular-weight oligomers.

Its subcellular location is the cell outer membrane. Its function is as follows. Structural rigidity of the outer membrane of elementary bodies and porin forming, permitting diffusion of solutes through the intracellular reticulate body membrane. This chain is 40 kDa major outer membrane protein, found in Actinobacillus pleuropneumoniae (Haemophilus pleuropneumoniae).